Here is a 486-residue protein sequence, read N- to C-terminus: ATP-dependent 6-phosphofructokinase (486 aa).

ATP-binding positions include Gly-105, 171–172, and 196–199; these read RG and GDGT. Position 197 (Asp-197) interacts with Mg(2+). Residues 225–227, 270–272, Glu-323, and 378–381 contribute to the substrate site; these read TID, MGR, and YMIR. Asp-227 (proton acceptor) is an active-site residue. A Peroxisomal targeting signal motif is present at residues 484 to 486; that stretch reads SKV.

Belongs to the phosphofructokinase type A (PFKA) family. PPi-dependent PFK group II subfamily. Atypical ATP-dependent clade 'X' sub-subfamily. Homotetramer. Mg(2+) serves as cofactor.

The protein resides in the glycosome. The enzyme catalyses beta-D-fructose 6-phosphate + ATP = beta-D-fructose 1,6-bisphosphate + ADP + H(+). It participates in carbohydrate degradation; glycolysis; D-glyceraldehyde 3-phosphate and glycerone phosphate from D-glucose: step 3/4. Its activity is regulated as follows. Allosterically activated by AMP. Functionally, catalyzes the phosphorylation of D-fructose 6-phosphate to fructose 1,6-bisphosphate by ATP, the first committing step of glycolysis. The chain is ATP-dependent 6-phosphofructokinase from Leishmania donovani.